We begin with the raw amino-acid sequence, 322 residues long: GTP 3',8-cyclase (322 aa).

In terms of domain architecture, Radical SAM core spans 5 to 233 (KYGRVVDYLR…NAPASIYRLD (229 aa)). Residue arginine 14 coordinates GTP. [4Fe-4S] cluster is bound by residues cysteine 21 and cysteine 25. Tyrosine 27 serves as a coordination point for S-adenosyl-L-methionine. Residue cysteine 28 coordinates [4Fe-4S] cluster. Arginine 64 contacts GTP. Glycine 68 contributes to the S-adenosyl-L-methionine binding site. Residue threonine 95 coordinates GTP. Serine 119 is a binding site for S-adenosyl-L-methionine. A GTP-binding site is contributed by lysine 155. Methionine 189 serves as a coordination point for S-adenosyl-L-methionine. The [4Fe-4S] cluster site is built by cysteine 249 and cysteine 252. Residue 254–256 (RIR) coordinates GTP. Cysteine 266 is a binding site for [4Fe-4S] cluster.

It belongs to the radical SAM superfamily. MoaA family. As to quaternary structure, monomer and homodimer. The cofactor is [4Fe-4S] cluster.

It catalyses the reaction GTP + AH2 + S-adenosyl-L-methionine = (8S)-3',8-cyclo-7,8-dihydroguanosine 5'-triphosphate + 5'-deoxyadenosine + L-methionine + A + H(+). It participates in cofactor biosynthesis; molybdopterin biosynthesis. Functionally, catalyzes the cyclization of GTP to (8S)-3',8-cyclo-7,8-dihydroguanosine 5'-triphosphate. This Campylobacter curvus (strain 525.92) protein is GTP 3',8-cyclase.